The chain runs to 396 residues: Lysophospholipid transporter LplT (396 aa).

Residues 1 to 17 lie on the Periplasmic side of the membrane; sequence MSESVHTNTSLWSKGMK. The chain crosses the membrane as a helical span at residues 18–38; it reads AVIVAQFLSAFGDNALLFATL. Residues 39–52 are Cytoplasmic-facing; sequence ALLKAQFYPEWSQP. A helical transmembrane segment spans residues 53–73; that stretch reads ILQMVFVGAYILLAPFVGQVA. The Periplasmic segment spans residues 74–90; that stretch reads DSFAKGRVMMFANGLKL. A helical transmembrane segment spans residues 91 to 111; sequence LGAASICFGINPFLGYTLVGV. Topologically, residues 112-144 are cytoplasmic; that stretch reads GAAAYSPAKYGILGELTTGSKLVKANGLMEASA. A helical membrane pass occupies residues 145–165; sequence IAAILLGSVAGGVLADWHVLV. Alanine 166 is a topological domain (periplasmic). A helical transmembrane segment spans residues 167 to 187; that stretch reads LAACALAYGGAVVANIYIPKL. Over 188–225 the chain is Cytoplasmic; that stretch reads AARPGQSWNLINMTRSFLNACTSLWCNGETRFSLVGTS. Residues 226 to 246 traverse the membrane as a helical segment; the sequence is LFWGAGVTLRFLLVLWVPVAL. The Periplasmic portion of the chain corresponds to 247–255; it reads GITDNATPT. Residues 256 to 276 traverse the membrane as a helical segment; that stretch reads YLNAMVAIGIVVGAGAAAKLV. Residues 277-279 lie on the Cytoplasmic side of the membrane; that stretch reads TLE. Residues 280–300 form a helical membrane-spanning segment; the sequence is TVSRCMPAGILIGVVVPIFSL. Over 301–303 the chain is Periplasmic; sequence QHE. The helical transmembrane segment at 304–324 threads the bilayer; the sequence is LLPAYALLMLIGVLGGFFVVP. The Cytoplasmic portion of the chain corresponds to 325 to 342; sequence LNALLQERGKKSVGAGNA. Residues 343–363 form a helical membrane-spanning segment; that stretch reads IAVQNLGENSAMLLMLGIYSL. The Periplasmic portion of the chain corresponds to 364 to 365; the sequence is AV. The helical transmembrane segment at 366–386 threads the bilayer; sequence MVGIPVVPIGIGFGALFALAI. At 387–396 the chain is on the cytoplasmic side; sequence TALWIWQRRH.

This sequence belongs to the major facilitator superfamily. LplT (TC 2.A.1.42) family.

It is found in the cell inner membrane. Catalyzes the facilitated diffusion of 2-acyl-glycero-3-phosphoethanolamine (2-acyl-GPE) into the cell. The protein is Lysophospholipid transporter LplT of Shigella flexneri.